A 65-amino-acid chain; its full sequence is Putative antitoxin VapB7 (65 aa).

This sequence belongs to the UPF0165 family.

In terms of biological role, possibly the antitoxin component of a type II toxin-antitoxin (TA) system. Its cognate toxin is VapC7 (Potential). The protein is Putative antitoxin VapB7 (vapB7) of Archaeoglobus fulgidus (strain ATCC 49558 / DSM 4304 / JCM 9628 / NBRC 100126 / VC-16).